A 234-amino-acid polypeptide reads, in one-letter code: MGTSVSKPVSDDKKKGTSVSKPVKNIVLVGRSVNGICTTGNNILGQNKFGSEGAFMHCQMYSTTTPDGQMINVIKTPGMFDLSVSEDYISKEIINCLTLAEEGVHAVLFVLSMKNRITQEEEYALNTLQRIFGSKILEYLIFLLIDGEKFEAKEFEDYFPECCPEFLMRVLRFCNGRKVLFNNMTNDEGVKAEQVNQVMAHVAAISKKNDEKPYTEDMYRNIKVNTFFSLIAFI.

The AIG1-type G domain maps to 21–223 (KPVKNIVLVG…YTEDMYRNIK (203 aa)). GTP-binding positions include 30-38 (GRSVNGICT), S51, and N183.

It belongs to the TRAFAC class TrmE-Era-EngA-EngB-Septin-like GTPase superfamily. AIG1/Toc34/Toc159-like paraseptin GTPase family. IAN subfamily. In terms of tissue distribution, mostly expressed in pollen. Also detected in lateral roots and radicles.

The sequence is that of Immune-associated nucleotide-binding protein 2 from Arabidopsis thaliana (Mouse-ear cress).